Here is a 525-residue protein sequence, read N- to C-terminus: Alpha-ketoglutaric semialdehyde dehydrogenase 2 (525 aa).

NAD(+) is bound by residues lysine 185, glutamate 188, and glycine 242 to glycine 247. Catalysis depends on glutamate 266, which acts as the Proton acceptor. The Nucleophile role is filled by cysteine 303. NAD(+) is bound at residue glutamate 394.

It belongs to the aldehyde dehydrogenase family. Homodimer.

The catalysed reaction is 2,5-dioxopentanoate + NADP(+) + H2O = 2-oxoglutarate + NADPH + 2 H(+). It carries out the reaction 2,5-dioxopentanoate + NAD(+) + H2O = 2-oxoglutarate + NADH + 2 H(+). Its pathway is carbohydrate acid metabolism; D-glucarate degradation. The protein operates within carbohydrate acid metabolism; galactarate degradation. Its function is as follows. Catalyzes the NAD(P)(+)-dependent oxidation of alpha-ketoglutaric semialdehyde (alphaKGSA) to alpha-ketoglutarate. Involved in D-glucarate/D-galactarate metabolism. Prefers NAD(+) to NADP(+) as a cosubstrate. This is Alpha-ketoglutaric semialdehyde dehydrogenase 2 from Azospirillum brasilense.